Reading from the N-terminus, the 323-residue chain is Quinolinate synthase (323 aa).

Iminosuccinate is bound by residues His37 and Ser54. Cys99 lines the [4Fe-4S] cluster pocket. Residues 125-127 and Ser142 contribute to the iminosuccinate site; that span reads YIN. Cys185 is a binding site for [4Fe-4S] cluster. Iminosuccinate contacts are provided by residues 211 to 213 and Thr228; that span reads HPE. Cys278 is a binding site for [4Fe-4S] cluster.

It belongs to the quinolinate synthase family. Type 2 subfamily. [4Fe-4S] cluster serves as cofactor.

It is found in the cytoplasm. It carries out the reaction iminosuccinate + dihydroxyacetone phosphate = quinolinate + phosphate + 2 H2O + H(+). Its pathway is cofactor biosynthesis; NAD(+) biosynthesis; quinolinate from iminoaspartate: step 1/1. Its function is as follows. Catalyzes the condensation of iminoaspartate with dihydroxyacetone phosphate to form quinolinate. This Trichodesmium erythraeum (strain IMS101) protein is Quinolinate synthase.